We begin with the raw amino-acid sequence, 344 residues long: Pre-mRNA-splicing factor cwc-21 (344 aa).

A compositionally biased stretch (polar residues) spans 1–19 (MSDNVGLSTPRGSGTSGYV). Disordered stretches follow at residues 1 to 58 (MSDN…LEHD) and 98 to 344 (EMER…DNRD). Residues 38 to 58 (KDFDSLKHQPRQPDKGLLEHD) show a composition bias toward basic and acidic residues. Residues 55–98 (LEHDRKREVEVKVFELRDKLEEEGVEEDEIETRCDELRRKLLAE) enclose the CWF21 domain. Residues 69–105 (ELRDKLEEEGVEEDEIETRCDELRRKLLAEMERNQNS) are a coiled coil. Composition is skewed to basic and acidic residues over residues 120 to 167 (QVHE…REAN), 188 to 226 (RGGD…DRPP), and 238 to 277 (GGRD…DTGR). The span at 288–306 (SRSRSRSRSYSRSRSPPRR) shows a compositional bias: basic residues. Composition is skewed to basic and acidic residues over residues 307 to 316 (RAADSQDRSL) and 327 to 344 (SPDR…DNRD).

The protein belongs to the CWC21 family. Associates with the NTC complex (or PRP19-associated complex). The NTC complex associates with the spliceosome after the release of the U1 and U4 snRNAs and forms the CWC spliceosome subcomplex reminiscent of a late-stage spliceosome.

Its subcellular location is the cytoplasm. The protein localises to the nucleus. In terms of biological role, involved in pre-mRNA splicing. May function at or prior to the first catalytic step of splicing at the catalytic center of the spliceosome. May do so by stabilizing the catalytic center or the position of the RNA substrate. The chain is Pre-mRNA-splicing factor cwc-21 (cwc-21) from Neurospora crassa (strain ATCC 24698 / 74-OR23-1A / CBS 708.71 / DSM 1257 / FGSC 987).